We begin with the raw amino-acid sequence, 260 residues long: Creatinine amidohydrolase (260 aa).

E34 provides a ligand contact to Mn(2+). Zn(2+) is bound by residues E34, H36, and D45. A Mn(2+)-binding site is contributed by D45. S78 serves as a coordination point for creatine. H120 lines the Mn(2+) pocket. H120 contacts Zn(2+). Residues Y121, W174, D175, and H178 each contribute to the creatine site. E183 is a Zn(2+) binding site.

The protein belongs to the creatininase superfamily. Homohexamer; trimer of dimers. It depends on Zn(2+) as a cofactor. Mn(2+) is required as a cofactor.

It carries out the reaction creatinine + H2O = creatine. The protein operates within amine and polyamine degradation; creatinine degradation. Its activity is regulated as follows. Is markedly inactivated in vitro by heavy metal ions, N-bromosuccinimide, ethoxyformic anhydride, and dye-sensitized photooxidation. Functionally, cyclic amidohydrolase that catalyzes the reversible conversion of creatinine to creatine. Is also active toward glycocyamidine, though the reaction rate is very low, but it is completely inert toward hydantoin and its derivatives. This Pseudomonas putida (Arthrobacter siderocapsulatus) protein is Creatinine amidohydrolase (crnA).